Reading from the N-terminus, the 207-residue chain is Fibronectin type III domain-containing protein 5b (207 aa).

The N-terminal stretch at 1–26 (MWGIKGSFAVLLLLFLAYIFASSVNA) is a signal peptide. Topologically, residues 27-146 (DSLSAPLNVT…EEVGQAAQLR (120 aa)) are extracellular. In terms of domain architecture, Fibronectin type-III spans 31–122 (APLNVTIKAL…EPVLFRTPKE (92 aa)). N-linked (GlcNAc...) asparagine glycosylation is found at Asn34 and Asn79. A helical membrane pass occupies residues 147–167 (AGELIIIVVVLVMWAGVIALF). Residues 168–207 (CRQYDIIKDNEPNNNKDKAKNSSECSTPEHPTGGLLRSKV) lie on the Cytoplasmic side of the membrane. Over residues 178–188 (EPNNNKDKAKN) the composition is skewed to basic and acidic residues. The segment at 178–207 (EPNNNKDKAKNSSECSTPEHPTGGLLRSKV) is disordered. The Microbody targeting signal signature appears at 205–207 (SKV).

As to quaternary structure, dimer; may exist in other oligomeric forms. Post-translationally, the extracellular domain is cleaved and released from the cell membrane.

The protein localises to the cell membrane. Its subcellular location is the peroxisome membrane. The protein resides in the secreted. In terms of biological role, may mediate beneficial effects of muscular exercise. This is Fibronectin type III domain-containing protein 5b (fndc5b) from Danio rerio (Zebrafish).